A 28-amino-acid polypeptide reads, in one-letter code: U15-ctenitoxin-Co1a (28 aa).

2 disulfide bridges follow: C3-C17 and C10-C22.

As to expression, expressed by the venom gland.

It is found in the secreted. Its function is as follows. Insecticidal neurotoxin that reversibly inhibits the N-methyl-D-aspartate (NMDA)-subtype of ionotropic glutamate receptor (GRIN) and inhibits inactivation of insect sodium channels (Nav). In vivo, is highly toxic to insects. This Ctenus ornatus (Brazilian spider) protein is U15-ctenitoxin-Co1a.